Here is a 147-residue protein sequence, read N- to C-terminus: Transthyretin (147 aa).

A signal peptide spans 1–20 (MASRRLLLLCLAGLVLVTEA). Position 30 is a sulfocysteine (Cys-30). Lys-35 provides a ligand contact to L-thyroxine. At Glu-62 the chain carries 4-carboxyglutamate. Glu-74 is an L-thyroxine binding site. Asn-118 carries an N-linked (GlcNAc...) asparagine glycan. Ser-137 is a binding site for L-thyroxine.

This sequence belongs to the transthyretin family. As to quaternary structure, homotetramer. Dimer of dimers. In the homotetramer, subunits assemble around a central channel that can accommodate two ligand molecules. Interacts with RBP4. Sulfonation of the reactive cysteine Cys-30 enhances the stability of the native conformation of TTR, avoiding misassembly of the protein leading to amyloid formation. Detected in serum (at protein level). Detected in liver.

The protein resides in the secreted. Thyroid hormone-binding protein. Probably transports thyroxine from the bloodstream to the brain. This Sorex araneus (Eurasian common shrew) protein is Transthyretin (TTR).